We begin with the raw amino-acid sequence, 484 residues long: UDP-N-acetylmuramate--L-alanine ligase (484 aa).

126–132 (GTHGKTT) serves as a coordination point for ATP.

This sequence belongs to the MurCDEF family.

It localises to the cytoplasm. It carries out the reaction UDP-N-acetyl-alpha-D-muramate + L-alanine + ATP = UDP-N-acetyl-alpha-D-muramoyl-L-alanine + ADP + phosphate + H(+). It participates in cell wall biogenesis; peptidoglycan biosynthesis. Its function is as follows. Cell wall formation. This chain is UDP-N-acetylmuramate--L-alanine ligase, found in Tolumonas auensis (strain DSM 9187 / NBRC 110442 / TA 4).